The chain runs to 105 residues: MQYLAAYALVALSGKTPSKAAVEAVLKAAGVAVDASRVDAVFQELEGKSFDALVAEGRAKLVGSGSAAPAAAASTAAAAAAVVAEAKKEEPEEEADDDMGFGLFD.

Residues 84–105 form a disordered region; sequence AEAKKEEPEEEADDDMGFGLFD.

Belongs to the eukaryotic ribosomal protein P1/P2 family. In terms of assembly, P1 and P2 exist as dimers at the large ribosomal subunit. Phosphorylated.

In terms of biological role, plays an important role in the elongation step of protein synthesis. The protein is Large ribosomal subunit protein P2 (ARP-1) of Leishmania donovani.